Consider the following 592-residue polypeptide: ATP-binding protein Uup (592 aa).

2 ABC transporter domains span residues methionine 1 to lysine 221 and phenylalanine 289 to isoleucine 516. Residues glycine 36–serine 43 and glycine 321–serine 328 contribute to the ATP site. Residues isoleucine 516–glutamine 550 are a coiled coil. The C-terminal domain (CTD), binds DNA stretch occupies residues phenylalanine 518–leucine 592.

It belongs to the ABC transporter superfamily. ABCF family. Uup subfamily.

It is found in the cytoplasm. The catalysed reaction is ATP + H2O = ADP + phosphate + H(+). In terms of biological role, probably plays a role in ribosome assembly or function. May be involved in resolution of branched DNA intermediates that result from template switching in postreplication gaps. Binds DNA and has ATPase activity. The chain is ATP-binding protein Uup from Buchnera aphidicola subsp. Schizaphis graminum (strain Sg).